The chain runs to 318 residues: Beta-sarcoglycan (318 aa).

A disordered region spans residues 1 to 32; sequence MAAAAAAAAEQQSSNGPVKKSMREKAVERRSV. The Cytoplasmic portion of the chain corresponds to 1–65; it reads MAAAAAAAAE…GLRGRKGNLA (65 aa). Positions 21–32 are enriched in basic and acidic residues; that stretch reads SMREKAVERRSV. The helical; Signal-anchor for type II membrane protein transmembrane segment at 66–86 threads the bilayer; the sequence is ICVIILLFILAVINLIITLVI. Residues 87–318 are Extracellular-facing; the sequence is WAVIRIGPNG…ISDNPCGNTH (232 aa). Asparagine 158, asparagine 211, and asparagine 258 each carry an N-linked (GlcNAc...) asparagine glycan. Disulfide bonds link cysteine 288/cysteine 314 and cysteine 290/cysteine 307.

Belongs to the sarcoglycan beta/delta/gamma/zeta family. Cross-link to form 2 major subcomplexes: one consisting of SGCB, SGCD and SGCG and the other consisting of SGCB and SGCD. The association between SGCB and SGCG is particularly strong while SGCA is loosely associated with the other sarcoglycans. Post-translationally, disulfide bonds are present. As to expression, highest expression in heart and skeletal muscle. Low expression in brain, kidney, placenta, pancreas and lung. High expression in fetal brain. Also found in fetal lung, kidney and liver.

The protein localises to the cell membrane. The protein resides in the sarcolemma. It localises to the cytoplasm. It is found in the cytoskeleton. Its function is as follows. Component of the sarcoglycan complex, a subcomplex of the dystrophin-glycoprotein complex which forms a link between the F-actin cytoskeleton and the extracellular matrix. The sequence is that of Beta-sarcoglycan (SGCB) from Homo sapiens (Human).